The sequence spans 66 residues: Protein I177L (66 aa).

N-linked (GlcNAc...) asparagine; by host glycosylation occurs at Asn11.

It belongs to the asfivirus I177L family.

It localises to the virion. The sequence is that of Protein I177L from Ornithodoros (relapsing fever ticks).